The primary structure comprises 295 residues: Keratin-like protein KRT222 (295 aa).

An IF rod domain is found at 1 to 150 (MELSQLLNEI…HLLEKEEIRY (150 aa)). Residues 2–150 (ELSQLLNEIR…HLLEKEEIRY (149 aa)) adopt a coiled-coil conformation.

Belongs to the intermediate filament family.

The chain is Keratin-like protein KRT222 (KRT222) from Homo sapiens (Human).